The chain runs to 148 residues: Snaclec 2 (148 aa).

A signal peptide spans 1-23 (MGRFIFVSFGLLVVFLSLSGTEA). 3 cysteine pairs are disulfide-bonded: Cys27–Cys38, Cys55–Cys144, and Cys121–Cys136. A C-type lectin domain is found at 34-145 (YDQNCYKAFE…CSGTHSFVCK (112 aa)).

Belongs to the snaclec family. In terms of assembly, heterodimer; disulfide-linked. In terms of tissue distribution, expressed by the venom gland.

The protein localises to the secreted. Its function is as follows. Interferes with one step of hemostasis (modulation of platelet aggregation, or coagulation cascade, for example). In Echis ocellatus (Ocellated saw-scaled viper), this protein is Snaclec 2.